Reading from the N-terminus, the 440-residue chain is Syntrophin-1 (440 aa).

2 PH domains span residues 2–208 and 227–340; these read AAVR…ACTT and QVRH…IGGY. The PDZ domain maps to 45-128; that stretch reads TVRVVKYDGN…VVDLQVQYRR (84 aa). In terms of domain architecture, SU spans 384 to 440; that stretch reads SFETIRATGDDGGRFLWVDFGPPHGEQELDLLNSAKPVVFILHSFLATKVYRLGLYA.

Belongs to the syntrophin family. As to quaternary structure, component of the dystrophin glycoprotein complex (DGC). Interacts with dyb-1, dys-1 and snf-6 to form the DGC. In terms of tissue distribution, expressed in neurons and muscles; particularly strong expression in the body wall, head and vulval muscles, and in ventral nerve cord (at protein level).

The protein localises to the membrane. It localises to the cytoplasm. Its subcellular location is the cytoskeleton. Functionally, adapter protein that binds to and probably organizes the subcellular localization of a variety of membrane proteins. May link various receptors to the actin cytoskeleton and the dystrophin glycoprotein complex (DGC). May also act by slowing calcium channel activity via a direct or indirect mechanism potentially involving other second messengers. Plays an early role in the formation of the neuromuscular junction and is necessary for muscle maintenance. This Caenorhabditis elegans protein is Syntrophin-1.